A 183-amino-acid polypeptide reads, in one-letter code: MLGLRNIILLSPPPTQITRPSLPPVNFAAVEDNNTVGEKVCRDCGNRAKKECLFERCRTCCKSRGYNCVTHVKSTWIPSSATRSSSSPSERKKKLKIDKQSSPNVSLLPTTTSRQERGFREGLPGKIEAPAVFKRTRVTAISNNEQAEIGYQATVTISGHIFKGFLHYYGVDHNKAFPCLSQK.

Positions 41, 44, 52, 57, 61, and 68 each coordinate Zn(2+). The zn(2)-C6 fungal-type; degenerate DNA-binding region spans 41-68 (CRDCGNRAKKECLFERCRTCCKSRGYNC). Low complexity predominate over residues 79-88 (SSATRSSSSP). Positions 79 to 121 (SSATRSSSSPSERKKKLKIDKQSSPNVSLLPTTTSRQERGFRE) are disordered. Positions 100-113 (QSSPNVSLLPTTTS) are enriched in polar residues. The short motif at 157–160 (ISGH) is the Required for homo- and heterodimerization element.

Belongs to the SHI protein family.

The protein localises to the nucleus. Its function is as follows. Transcription activator that binds DNA on 5'-ACTCTAC-3' and promotes auxin homeostasis-regulating gene expression (e.g. YUC genes), as well as genes affecting stamen development, cell expansion and timing of flowering. Synergistically with other SHI-related proteins, regulates gynoecium, stamen and leaf development in a dose-dependent manner, controlling apical-basal patterning. Promotes style and stigma formation, and influences vascular development during gynoecium development. May also have a role in the formation and/or maintenance of the shoot apical meristem (SAM). The protein is Protein SHI RELATED SEQUENCE 6 (SRS6) of Arabidopsis thaliana (Mouse-ear cress).